The following is a 161-amino-acid chain: Cyclic pyranopterin monophosphate synthase (161 aa).

Substrate contacts are provided by residues 75 to 77 (LCH) and 113 to 114 (ME). Asp128 is a catalytic residue.

This sequence belongs to the MoaC family. As to quaternary structure, homohexamer; trimer of dimers.

The enzyme catalyses (8S)-3',8-cyclo-7,8-dihydroguanosine 5'-triphosphate = cyclic pyranopterin phosphate + diphosphate. The protein operates within cofactor biosynthesis; molybdopterin biosynthesis. Functionally, catalyzes the conversion of (8S)-3',8-cyclo-7,8-dihydroguanosine 5'-triphosphate to cyclic pyranopterin monophosphate (cPMP). This chain is Cyclic pyranopterin monophosphate synthase, found in Methylobacillus flagellatus (strain ATCC 51484 / DSM 6875 / VKM B-1610 / KT).